The chain runs to 73 residues: Protein WFDC10B (73 aa).

Residues 1 to 21 (MAPQTLLLVLVLCVLLLQAQG) form the signal peptide. Residues 28 to 73 (RMQRIKVCEKRPSIDLCIHHCSYFQKCETNKICCSAFCGNICMSIL) form the WAP domain.

Ubiquitously expressed.

It localises to the secreted. In Homo sapiens (Human), this protein is Protein WFDC10B (WFDC10B).